Reading from the N-terminus, the 415-residue chain is Gamma-glutamyl phosphate reductase (415 aa).

The protein belongs to the gamma-glutamyl phosphate reductase family.

Its subcellular location is the cytoplasm. It carries out the reaction L-glutamate 5-semialdehyde + phosphate + NADP(+) = L-glutamyl 5-phosphate + NADPH + H(+). Its pathway is amino-acid biosynthesis; L-proline biosynthesis; L-glutamate 5-semialdehyde from L-glutamate: step 2/2. In terms of biological role, catalyzes the NADPH-dependent reduction of L-glutamate 5-phosphate into L-glutamate 5-semialdehyde and phosphate. The product spontaneously undergoes cyclization to form 1-pyrroline-5-carboxylate. The sequence is that of Gamma-glutamyl phosphate reductase from Pseudoalteromonas translucida (strain TAC 125).